The sequence spans 364 residues: NADH-quinone oxidoreductase subunit H (364 aa).

8 helical membrane passes run 21–41 (AGQI…LLLA), 88–108 (VFLL…AVIP), 120–140 (VGIL…IMGG), 159–179 (MVSY…LAGS), 208–228 (LPLL…GLAE), 267–287 (IVLI…APFP), 301–321 (FYYF…VSMA), and 340–360 (VFLP…VFGP).

It belongs to the complex I subunit 1 family. NDH-1 is composed of 14 different subunits. Subunits NuoA, H, J, K, L, M, N constitute the membrane sector of the complex.

The protein resides in the cell inner membrane. The catalysed reaction is a quinone + NADH + 5 H(+)(in) = a quinol + NAD(+) + 4 H(+)(out). NDH-1 shuttles electrons from NADH, via FMN and iron-sulfur (Fe-S) centers, to quinones in the respiratory chain. The immediate electron acceptor for the enzyme in this species is believed to be ubiquinone. Couples the redox reaction to proton translocation (for every two electrons transferred, four hydrogen ions are translocated across the cytoplasmic membrane), and thus conserves the redox energy in a proton gradient. This subunit may bind ubiquinone. This Phenylobacterium zucineum (strain HLK1) protein is NADH-quinone oxidoreductase subunit H.